A 215-amino-acid polypeptide reads, in one-letter code: Cytochrome b6 (215 aa).

Residues 32–52 traverse the membrane as a helical segment; it reads IFYCLGGITLTCFLIQVATGF. Heme c is bound at residue Cys35. Heme b-binding residues include His86 and His100. 3 helical membrane passes run 90–110, 116–136, and 186–206; these read ASMM…TGGF, LTWV…VTGY, and LHTF…FLMI. Residues His187 and His202 each contribute to the heme b site.

The protein belongs to the cytochrome b family. PetB subfamily. The 4 large subunits of the cytochrome b6-f complex are cytochrome b6, subunit IV (17 kDa polypeptide, PetD), cytochrome f and the Rieske protein, while the 4 small subunits are PetG, PetL, PetM and PetN. The complex functions as a dimer. Requires heme b as cofactor. It depends on heme c as a cofactor.

The protein resides in the plastid. It is found in the chloroplast thylakoid membrane. In terms of biological role, component of the cytochrome b6-f complex, which mediates electron transfer between photosystem II (PSII) and photosystem I (PSI), cyclic electron flow around PSI, and state transitions. This chain is Cytochrome b6, found in Spirogyra maxima (Green alga).